A 127-amino-acid chain; its full sequence is Large ribosomal subunit protein bL12 (127 aa).

It belongs to the bacterial ribosomal protein bL12 family. Homodimer. Part of the ribosomal stalk of the 50S ribosomal subunit. Forms a multimeric L10(L12)X complex, where L10 forms an elongated spine to which 2 to 4 L12 dimers bind in a sequential fashion. Binds GTP-bound translation factors.

Forms part of the ribosomal stalk which helps the ribosome interact with GTP-bound translation factors. Is thus essential for accurate translation. This chain is Large ribosomal subunit protein bL12, found in Sinorhizobium fredii (strain NBRC 101917 / NGR234).